The sequence spans 134 residues: Submaxillary gland androgen-regulated protein 3A (134 aa).

The N-terminal stretch at 1-22 (MKSLTWILGLWALAACFTPGES) is a signal peptide. A disordered region spans residues 19–134 (PGESQRGPRG…TDPALPTPAP (116 aa)). Pro residues-rich tracts occupy residues 28-43 (GPYP…PPCF), 50-85 (VPPP…PPYG), and 94-119 (LPPP…PPFF).

The protein belongs to the PROL1/PROL3 family.

It is found in the secreted. Its function is as follows. May play a role in protection or detoxification. This Homo sapiens (Human) protein is Submaxillary gland androgen-regulated protein 3A (SMR3A).